A 564-amino-acid polypeptide reads, in one-letter code: Sphingomyelin phosphodiesterase 1 (564 aa).

A signal peptide spans 1 to 17 (MRIIYLISTVLLIYTNA). Residues 37-121 (FQPLCISCTG…IILPDCADPT (85 aa)) form the Saposin B-type domain. Disulfide bonds link Cys41-Cys117, Cys44-Cys110, and Cys72-Cys83. The N-linked (GlcNAc...) asparagine glycan is linked to Asn151. The Zn(2+) site is built by Asp165 and His167. Disulfide bonds link Cys180-Cys185 and Cys186-Cys206. Asn221 carries an N-linked (GlcNAc...) asparagine glycan. Positions 234 and 274 each coordinate Zn(2+). A disulfide bridge connects residues Cys341 and Cys389. Residue Asn351 is glycosylated (N-linked (GlcNAc...) asparagine). Residues His381, His415, and His417 each contribute to the Zn(2+) site. A glycan (N-linked (GlcNAc...) asparagine) is linked at Asn430. Cystine bridges form between Cys538/Cys542 and Cys548/Cys561. N-linked (GlcNAc...) asparagine glycosylation occurs at Asn556.

It belongs to the acid sphingomyelinase family. Requires Zn(2+) as cofactor.

It localises to the secreted. It carries out the reaction a sphingomyelin + H2O = phosphocholine + an N-acylsphing-4-enine + H(+). It catalyses the reaction an N-acyl-15-methylhexadecasphing-4-enine-1-phosphocholine + H2O = an N-acyl-15-methylhexadecasphing-4-enine + phosphocholine + H(+). It participates in lipid metabolism; sphingolipid metabolism. Its function is as follows. Sphingomyelin phosphodiesterase (sphingomyelinase) that converts sphingomyelin to ceramide (N-acyl-sphingoid base) and phosphocholine at acidic pH. Displays its enzymatic activity when secreted. May play distinct roles in signaling. This Caenorhabditis elegans protein is Sphingomyelin phosphodiesterase 1 (asm-1).